A 498-amino-acid polypeptide reads, in one-letter code: Cytochrome P450 monooxygenase ltmP (498 aa).

Residues 1–21 (MLMLHAVPVGICLLLWYVVYG) form the signal peptide. A glycan (N-linked (GlcNAc...) asparagine) is linked at asparagine 420. Cysteine 435 is a binding site for heme.

This sequence belongs to the cytochrome P450 family. The cofactor is heme.

Its pathway is secondary metabolite biosynthesis. Functionally, cytochrome P450 monooxygenase; part of the gene clusters that mediates the biosynthesis of lolitrems, indole-diterpene mycotoxins that are potent tremorgens in mammals, and are synthesized by clavicipitaceous fungal endophytes in association with their grass hosts. The geranylgeranyl diphosphate (GGPP) synthase ltmG is proposed to catalyze the first step in lolitrem biosynthesis. LtmG catalyzes a series of iterative condensations of isopentenyl diphosphate (IPP) with dimethylallyl diphosphate (DMAPP), geranyl diphosphate (GPP), and farnesyl diphosphate (FPP), to form GGPP. GGPP then condenses with indole-3-glycerol phosphate to form 3-geranylgeranylindole, an acyclic intermediate, to be incorporated into paxilline. Either ltmG or ltmC could be responsible for this step, as both are putative prenyl transferases. The FAD-dependent monooxygenase ltmM then catalyzes the epoxidation of the two terminal alkenes of the geranylgeranyl moiety, which is subsequently cyclized by ltmB, to paspaline. The cytochrome P450 monooxygenases ltmQ and ltmP can sequentially oxidize paspaline to terpendole E and terpendole F. Alternatively, ltmP converts paspaline to an intermediate which is oxidized by ltmQ to terpendole F. LtmF, ltmK, ltmE and ltmJ appear to be unique to the epichloe endophytes. The prenyltransferase ltmF is involved in the 27-hydroxyl-O-prenylation. The cytochrome P450 monooxygenase ltmK is required for the oxidative acetal ring formation. The multi-functional prenyltransferase ltmE is required for C20- and C21-prenylations of the indole ring of paspalanes and acts together with the cytochrome P450 monooxygenase ltmJ to yield lolitremanes by multiple oxidations and ring closures. The stereoisomer pairs of lolitriol and lolitrem N or lolitrem B and lolitrem F may be attributed to variations in the way in which ring closure can occur under the action of ltmJ. While the major product of this pathway is lolitrem B, the prenyl transferases and cytochrome P450 monooxygenases identified in this pathway have a remarkable versatility in their regio- and stereo-specificities to generate a diverse range of metabolites that are products of a metabolic grid rather than a linear pathway. In Epichloe festucae var. lolii (Neotyphodium lolii), this protein is Cytochrome P450 monooxygenase ltmP.